We begin with the raw amino-acid sequence, 449 residues long: Hyaluronidase-2 (449 aa).

An N-terminal signal peptide occupies residues 1 to 23; the sequence is MYHLWIKCLAAWIFLKRCNGVHA. Intrachain disulfides connect Cys47–Cys340 and Cys211–Cys227. N-linked (GlcNAc...) asparagine glycans are attached at residues Asn67, Asn103, and Asn111. Glu135 functions as the Proton donor in the catalytic mechanism. Asn153 is a glycosylation site (N-linked (GlcNAc...) asparagine). An N-linked (GlcNAc...) asparagine glycan is attached at Asn357. Disulfide bonds link Cys365–Cys376, Cys370–Cys427, and Cys429–Cys438. Residue Asn401 is glycosylated (N-linked (GlcNAc...) asparagine). The 12-residue stretch at 427-438 folds into the EGF-like domain; the sequence is CQCYQGWKGLYC.

It belongs to the glycosyl hydrolase 56 family. In terms of assembly, monomer. As to expression, expressed by the venom gland.

Its subcellular location is the secreted. It catalyses the reaction Random hydrolysis of (1-&gt;4)-linkages between N-acetyl-beta-D-glucosamine and D-glucuronate residues in hyaluronate.. Functionally, snake venom endo-hyaluronidase that degrades hyaluronan to smaller oligosaccharide fragments. In venom, it is not toxic by itself, but increases the diffusion of other venom proteins by degrading the extracellular matrix. In addition, it displays antiedematogenic activity. This chain is Hyaluronidase-2, found in Bitis arietans (African puff adder).